Reading from the N-terminus, the 174-residue chain is NADH-quinone oxidoreductase subunit B 1 (174 aa).

[4Fe-4S] cluster-binding residues include cysteine 53, cysteine 54, cysteine 118, and cysteine 148.

It belongs to the complex I 20 kDa subunit family. As to quaternary structure, NDH-1 is composed of 14 different subunits. Subunits NuoB, C, D, E, F, and G constitute the peripheral sector of the complex. [4Fe-4S] cluster serves as cofactor.

The protein localises to the cell inner membrane. The enzyme catalyses a quinone + NADH + 5 H(+)(in) = a quinol + NAD(+) + 4 H(+)(out). In terms of biological role, NDH-1 shuttles electrons from NADH, via FMN and iron-sulfur (Fe-S) centers, to quinones in the respiratory chain. The immediate electron acceptor for the enzyme in this species is believed to be ubiquinone. Couples the redox reaction to proton translocation (for every two electrons transferred, four hydrogen ions are translocated across the cytoplasmic membrane), and thus conserves the redox energy in a proton gradient. The protein is NADH-quinone oxidoreductase subunit B 1 of Cereibacter sphaeroides (strain KD131 / KCTC 12085) (Rhodobacter sphaeroides).